The following is an 865-amino-acid chain: DNA-directed RNA polymerase subunit Rpo1N (865 aa).

Cysteine 60, cysteine 63, cysteine 70, histidine 73, cysteine 100, cysteine 103, cysteine 146, and cysteine 149 together coordinate Zn(2+). Residues aspartate 451, aspartate 453, and aspartate 455 each coordinate Mg(2+). Residues 500–531 (EHTSSQGKRLFSVRSRPPDPQEGRAPPPDREG) form a disordered region. The span at 515–531 (RPPDPQEGRAPPPDREG) shows a compositional bias: basic and acidic residues.

This sequence belongs to the RNA polymerase beta' chain family. Part of the RNA polymerase complex. Mg(2+) is required as a cofactor. Zn(2+) serves as cofactor.

It is found in the cytoplasm. The enzyme catalyses RNA(n) + a ribonucleoside 5'-triphosphate = RNA(n+1) + diphosphate. DNA-dependent RNA polymerase (RNAP) catalyzes the transcription of DNA into RNA using the four ribonucleoside triphosphates as substrates. Forms the clamp head domain. In Methanothermobacter thermautotrophicus (strain Winter) (Methanobacterium thermoautotrophicum), this protein is DNA-directed RNA polymerase subunit Rpo1N.